The following is a 93-amino-acid chain: Beta-defensin 128 (93 aa).

Residues 1–18 (MKLFLVLIILLFEVLTDG) form the signal peptide. 3 cysteine pairs are disulfide-bonded: cysteine 24–cysteine 52, cysteine 32–cysteine 46, and cysteine 36–cysteine 53.

The protein belongs to the beta-defensin family.

The protein resides in the secreted. Its function is as follows. Has antibacterial activity. In Pongo pygmaeus (Bornean orangutan), this protein is Beta-defensin 128 (DEFB128).